Consider the following 253-residue polypeptide: Uracil-DNA glycosylase (253 aa).

Residue D79 is the Proton acceptor of the active site.

The protein belongs to the uracil-DNA glycosylase (UDG) superfamily. UNG family.

It localises to the cytoplasm. The enzyme catalyses Hydrolyzes single-stranded DNA or mismatched double-stranded DNA and polynucleotides, releasing free uracil.. In terms of biological role, excises uracil residues from the DNA which can arise as a result of misincorporation of dUMP residues by DNA polymerase or due to deamination of cytosine. The chain is Uracil-DNA glycosylase from Xylella fastidiosa (strain M23).